Here is a 37-residue protein sequence, read N- to C-terminus: Large ribosomal subunit protein bL36 (37 aa).

This sequence belongs to the bacterial ribosomal protein bL36 family.

The sequence is that of Large ribosomal subunit protein bL36 from Beutenbergia cavernae (strain ATCC BAA-8 / DSM 12333 / CCUG 43141 / JCM 11478 / NBRC 16432 / NCIMB 13614 / HKI 0122).